The sequence spans 436 residues: Trigger factor (436 aa).

The 86-residue stretch at 164–249 (GDTVVIDYKG…IHEIKEKQLP (86 aa)) folds into the PPIase FKBP-type domain.

It belongs to the FKBP-type PPIase family. Tig subfamily.

It localises to the cytoplasm. It catalyses the reaction [protein]-peptidylproline (omega=180) = [protein]-peptidylproline (omega=0). Involved in protein export. Acts as a chaperone by maintaining the newly synthesized protein in an open conformation. Functions as a peptidyl-prolyl cis-trans isomerase. The polypeptide is Trigger factor (Limosilactobacillus reuteri (strain DSM 20016) (Lactobacillus reuteri)).